A 201-amino-acid polypeptide reads, in one-letter code: Large ribosomal subunit protein uL4 (201 aa).

Residues 46-71 are disordered; it reads QKTRAEITGSGKKPWRQKGTGRARSG.

Belongs to the universal ribosomal protein uL4 family. In terms of assembly, part of the 50S ribosomal subunit.

Functionally, one of the primary rRNA binding proteins, this protein initially binds near the 5'-end of the 23S rRNA. It is important during the early stages of 50S assembly. It makes multiple contacts with different domains of the 23S rRNA in the assembled 50S subunit and ribosome. Its function is as follows. Forms part of the polypeptide exit tunnel. This is Large ribosomal subunit protein uL4 from Klebsiella pneumoniae (strain 342).